Here is a 490-residue protein sequence, read N- to C-terminus: Glycine--tRNA ligase (490 aa).

Positions 99 and 163 each coordinate substrate. ATP contacts are provided by residues 195–197 (RNE), 205–210 (FRTREF), 282–283 (EL), and 326–329 (GLTR). Residue 210 to 214 (FEQME) coordinates substrate. 322–326 (EPAAG) is a substrate binding site. The disordered stretch occupies residues 470 to 490 (PVEMGGEPWPESGVQEAGGLY).

It belongs to the class-II aminoacyl-tRNA synthetase family. In terms of assembly, homodimer.

It localises to the cytoplasm. It catalyses the reaction tRNA(Gly) + glycine + ATP = glycyl-tRNA(Gly) + AMP + diphosphate. Functionally, catalyzes the attachment of glycine to tRNA(Gly). This Bifidobacterium longum (strain NCC 2705) protein is Glycine--tRNA ligase.